We begin with the raw amino-acid sequence, 639 residues long: Mediator of RNA polymerase II transcription subunit 17 (639 aa).

This sequence belongs to the Mediator complex subunit 17 family. Component of the Mediator complex.

It is found in the nucleus. Component of the Mediator complex, a coactivator involved in the regulated transcription of nearly all RNA polymerase II-dependent genes. Mediator functions as a bridge to convey information from gene-specific regulatory proteins to the basal RNA polymerase II transcription machinery. Mediator is recruited to promoters by direct interactions with regulatory proteins and serves as a scaffold for the assembly of a functional preinitiation complex with RNA polymerase II and the general transcription factors. The chain is Mediator of RNA polymerase II transcription subunit 17 (med17) from Xenopus tropicalis (Western clawed frog).